A 130-amino-acid polypeptide reads, in one-letter code: NADH-quinone oxidoreductase subunit A (130 aa).

Helical transmembrane passes span 17-37, 74-94, and 99-119; these read YIFV…MLAL, LVGI…PWAV, and LGPA…VGFV.

This sequence belongs to the complex I subunit 3 family. NDH-1 is composed of 14 different subunits. Subunits NuoA, H, J, K, L, M, N constitute the membrane sector of the complex.

The protein resides in the cell inner membrane. It carries out the reaction a quinone + NADH + 5 H(+)(in) = a quinol + NAD(+) + 4 H(+)(out). NDH-1 shuttles electrons from NADH, via FMN and iron-sulfur (Fe-S) centers, to quinones in the respiratory chain. The immediate electron acceptor for the enzyme in this species is believed to be ubiquinone. Couples the redox reaction to proton translocation (for every two electrons transferred, four hydrogen ions are translocated across the cytoplasmic membrane), and thus conserves the redox energy in a proton gradient. The chain is NADH-quinone oxidoreductase subunit A from Neorickettsia sennetsu (strain ATCC VR-367 / Miyayama) (Ehrlichia sennetsu).